The chain runs to 347 residues: Dolichyl-diphosphooligosaccharide--protein glycosyltransferase subunit TUSC3 (347 aa).

Positions 1–41 are cleaved as a signal peptide; the sequence is MSARAAPSRRRQAGRRLRYLPTGSFPFLLLLLLLCIQLGGG. Over 42 to 196 the chain is Lumenal; the sequence is QKKKENLLAE…DVHIRVFRPP (155 aa). The Thioredoxin domain maps to 59 to 187; that stretch reads WSSRRSIFRM…LAKWIADRTD (129 aa). Residue N83 is glycosylated (N-linked (GlcNAc...) asparagine). C99 and C102 are oxidised to a cystine. A helical transmembrane segment spans residues 197-217; that stretch reads NYSGTIALALLVSLVGGLLYL. The Cytoplasmic segment spans residues 218–221; the sequence is RRNN. Residues 222–242 form a helical membrane-spanning segment; that stretch reads LEFIYNKTGWAMVSLCIVFAM. At 243-276 the chain is on the lumenal side; it reads TSGQMWNHIRGPPYAHKNPHNGQVSYIHGSSQAQ. The helical transmembrane segment at 277–297 threads the bilayer; it reads FVAESHIILVLNAAITMGMVL. Residues 298-312 lie on the Cytoplasmic side of the membrane; that stretch reads LNEAATSKGDVGKRR. Residues 313–333 traverse the membrane as a helical segment; sequence IICLVGLGLVVFFFSFLLSIF. Residues 334–347 are Lumenal-facing; that stretch reads RSKYHGYPYSFLIK.

The protein belongs to the OST3/OST6 family. In terms of assembly, accessory component of the STT3B-containing form of the oligosaccharyltransferase (OST) complex. OST exists in two different complex forms which contain common core subunits RPN1, RPN2, OST48, OST4, DAD1 and TMEM258, either STT3A or STT3B as catalytic subunits, and form-specific accessory subunits. OST can form stable complexes with the Sec61 complex or with both the Sec61 and TRAP complexes. The association of TUSC3 or MAGT1 with the STT3B-containing complex seems to be mutually exclusvice.

Its subcellular location is the endoplasmic reticulum membrane. It functions in the pathway protein modification; protein glycosylation. Acts as accessory component of the N-oligosaccharyl transferase (OST) complex which catalyzes the transfer of a high mannose oligosaccharide from a lipid-linked oligosaccharide donor to an asparagine residue within an Asn-X-Ser/Thr consensus motif in nascent polypeptide chains. Involved in N-glycosylation of STT3B-dependent substrates. Specifically required for the glycosylation of a subset of acceptor sites that are near cysteine residues; in this function seems to act redundantly with MAGT1. In its oxidized form proposed to form transient mixed disulfides with a glycoprotein substrate to facilitate access of STT3B to the unmodified acceptor site. Also has oxidoreductase-independent functions in the STT3B-containing OST complex possibly involving substrate recognition. Could indirectly play a role in Mg(2+) transport. This Mus musculus (Mouse) protein is Dolichyl-diphosphooligosaccharide--protein glycosyltransferase subunit TUSC3 (Tusc3).